The sequence spans 209 residues: V-type ATP synthase subunit D (209 aa).

It belongs to the V-ATPase D subunit family.

Functionally, produces ATP from ADP in the presence of a proton gradient across the membrane. This is V-type ATP synthase subunit D from Anaeromyxobacter dehalogenans (strain 2CP-1 / ATCC BAA-258).